A 332-amino-acid chain; its full sequence is Biotin synthase (332 aa).

The Radical SAM core domain occupies 53–282; sequence YFGKKVKLNM…TKEIRISGGR (230 aa). [4Fe-4S] cluster is bound by residues cysteine 71, cysteine 75, and cysteine 78. [2Fe-2S] cluster-binding residues include cysteine 115, cysteine 147, cysteine 207, and arginine 277.

It belongs to the radical SAM superfamily. Biotin synthase family. Homodimer. It depends on [4Fe-4S] cluster as a cofactor. The cofactor is [2Fe-2S] cluster.

The catalysed reaction is (4R,5S)-dethiobiotin + (sulfur carrier)-SH + 2 reduced [2Fe-2S]-[ferredoxin] + 2 S-adenosyl-L-methionine = (sulfur carrier)-H + biotin + 2 5'-deoxyadenosine + 2 L-methionine + 2 oxidized [2Fe-2S]-[ferredoxin]. It participates in cofactor biosynthesis; biotin biosynthesis; biotin from 7,8-diaminononanoate: step 2/2. Functionally, catalyzes the conversion of dethiobiotin (DTB) to biotin by the insertion of a sulfur atom into dethiobiotin via a radical-based mechanism. The chain is Biotin synthase from Bacillus anthracis.